A 256-amino-acid chain; its full sequence is Acetylglutamate kinase (256 aa).

Substrate is bound by residues 40-41 (GG), R62, and N154.

The protein belongs to the acetylglutamate kinase family. ArgB subfamily.

It is found in the cytoplasm. The enzyme catalyses N-acetyl-L-glutamate + ATP = N-acetyl-L-glutamyl 5-phosphate + ADP. The protein operates within amino-acid biosynthesis; L-arginine biosynthesis; N(2)-acetyl-L-ornithine from L-glutamate: step 2/4. Functionally, catalyzes the ATP-dependent phosphorylation of N-acetyl-L-glutamate. This chain is Acetylglutamate kinase, found in Staphylococcus aureus (strain MRSA252).